A 334-amino-acid chain; its full sequence is MKQVVYIANSESKNIEVWNLCKSGKMNLIQKIETDGKIQPINIIQKRNLLYAGIFPDNKIITYSINHNGFLEKKNESNIPGKANYISFDKKKEFLFCSSYHSNFISVSPLNKFGIPQNPIQIIYNIEGCHAAKMNYKYNILFVISLKEDCIYLYYLTDFGILKSTEQNILHTQKKSGPRHIIFHPNQDFIYTINELNGTIDVWKIYKKNNVIKVKNIQNIHVLKNRFLKDYWCSDIHITSCGRFLYACDRFFNIISLFHINQNDNKLVFFKSYDTEEQPRSFNINSHNTHLIVAGEKSNTFIIYGISNSTGELKKINVYSTGQRPVWILIHALC.

It belongs to the cycloisomerase 2 family.

It catalyses the reaction 6-phospho-D-glucono-1,5-lactone + H2O = 6-phospho-D-gluconate + H(+). It functions in the pathway carbohydrate degradation; pentose phosphate pathway; D-ribulose 5-phosphate from D-glucose 6-phosphate (oxidative stage): step 2/3. Catalyzes the hydrolysis of 6-phosphogluconolactone to 6-phosphogluconate. The sequence is that of 6-phosphogluconolactonase from Buchnera aphidicola subsp. Acyrthosiphon pisum (strain Tuc7).